A 134-amino-acid chain; its full sequence is Bradykinin-related peptides (134 aa).

Positions 1-22 (MAFLKKSLFLVLFLGVVSLSFC) are cleaved as a signal peptide. 3 consecutive propeptides follow at residues 23–44 (EEEK…ESLG), 71–82 (RSISGLTPIRLS), and 99–121 (ISEA…PLRG). Over residues 24–33 (EEKREEHEEE) the composition is skewed to basic and acidic residues. The interval 24 to 71 (EEKREEHEEEKRDEEDAESLGKRYGGLSPLRISKRVPPGFTPFRSPAR) is disordered. Pro-126 carries the post-translational modification 4-hydroxyproline; partial; in form [Hyp3]-bradykinin and [Hyp3]-bradykinin-Val,Asp.

It belongs to the frog skin active peptide (FSAP) family. Bradykinin-related peptide subfamily. As to expression, expressed by the skin glands. Expression levels in inguinal glands are much higher than in granular glands.

The protein resides in the secreted. Functionally, may produce in vitro relaxation of rat arterial smooth muscle and constriction of intestinal smooth muscle. May target bradykinin receptors (BDKRB). This is Bradykinin-related peptides from Physalaemus nattereri (Cuyaba dwarf frog).